A 338-amino-acid chain; its full sequence is Phosphate acyltransferase (338 aa).

The protein belongs to the PlsX family. Homodimer. Probably interacts with PlsY.

It localises to the cytoplasm. The enzyme catalyses a fatty acyl-[ACP] + phosphate = an acyl phosphate + holo-[ACP]. Its pathway is lipid metabolism; phospholipid metabolism. Catalyzes the reversible formation of acyl-phosphate (acyl-PO(4)) from acyl-[acyl-carrier-protein] (acyl-ACP). This enzyme utilizes acyl-ACP as fatty acyl donor, but not acyl-CoA. This is Phosphate acyltransferase from Mannheimia succiniciproducens (strain KCTC 0769BP / MBEL55E).